We begin with the raw amino-acid sequence, 97 residues long: RNA-binding protein YhbY (97 aa).

The CRM domain occupies 1–97 (MNLSTKQKQH…TKERKISLPR (97 aa)).

This Escherichia coli O157:H7 protein is RNA-binding protein YhbY (yhbY).